We begin with the raw amino-acid sequence, 221 residues long: Small ribosomal subunit protein eS1 (221 aa).

The protein belongs to the eukaryotic ribosomal protein eS1 family.

This Pyrobaculum aerophilum (strain ATCC 51768 / DSM 7523 / JCM 9630 / CIP 104966 / NBRC 100827 / IM2) protein is Small ribosomal subunit protein eS1.